Reading from the N-terminus, the 242-residue chain is Sensory transduction protein LytT (242 aa).

Positions 2 to 116 (HVLIVDDEPL…KITQVIEKAS (115 aa)) constitute a Response regulatory domain. The region spanning 137–241 (IPIQGEDRIY…VKEFKEKLGL (105 aa)) is the HTH LytTR-type domain.

Phosphorylated by LytS.

It localises to the cytoplasm. In terms of biological role, member of the two-component regulatory system LytS/LytT that probably regulates genes involved in cell wall metabolism. This chain is Sensory transduction protein LytT (lytT), found in Enterococcus faecalis (strain ATCC 700802 / V583).